The primary structure comprises 1488 residues: Chromosome partition protein MukB (1488 aa).

34 to 41 (GGNGAGKS) serves as a coordination point for ATP. Coiled coils occupy residues 326–418 (LEAD…QYNQ), 444–472 (LDTFQAKEQEATEKLLSLEQKMSVAQTAH), and 509–602 (RHLA…QRAP). Residues 666–783 (PGGAEDQRLN…SLPIFGRAAR (118 aa)) form a flexible hinge region. Coiled coils occupy residues 835-923 (EAEI…AKLE), 977-1116 (EMLS…AKAG), and 1209-1265 (VEAI…LQSV). Residues 1049-1074 (ADSGAEERARQRRDELHAQLSNNRSR) form a disordered region. The span at 1051–1065 (SGAEERARQRRDELH) shows a compositional bias: basic and acidic residues.

The protein belongs to the SMC family. MukB subfamily. In terms of assembly, homodimerization via its hinge domain. Binds to DNA via its C-terminal region. Interacts, and probably forms a ternary complex, with MukE and MukF via its C-terminal region. The complex formation is stimulated by calcium or magnesium. Interacts with tubulin-related protein FtsZ.

Its subcellular location is the cytoplasm. It localises to the nucleoid. Its function is as follows. Plays a central role in chromosome condensation, segregation and cell cycle progression. Functions as a homodimer, which is essential for chromosome partition. Involved in negative DNA supercoiling in vivo, and by this means organize and compact chromosomes. May achieve or facilitate chromosome segregation by condensation DNA from both sides of a centrally located replisome during cell division. The protein is Chromosome partition protein MukB of Salmonella gallinarum (strain 287/91 / NCTC 13346).